A 295-amino-acid polypeptide reads, in one-letter code: Putative fused nickel transport protein NikMN (295 aa).

8 helical membrane-spanning segments follow: residues 8–28 (LDLSIAGLFYILSIAVLGYSI), 39–59 (LFGIVAAAIFAAQMLNWPIPG), 70–90 (LAGILLGPYAGALAMAVVLTI), 98–118 (GGITALGANVWNMAIVNVFVG), 135–155 (FIAGWIGITLAAIFAGIEIGI), 175–195 (ALLGLVEGTITAGVVSYIAAA), 211–231 (LAVIAAMIAVSPLFAYAAELV), and 268–288 (AGTLIAGIVGTVIVLALGFAL).

It belongs to the CbiM family. NikM subfamily.

Its subcellular location is the cell membrane. Its function is as follows. May be involved in nickel transport. The chain is Putative fused nickel transport protein NikMN from Archaeoglobus fulgidus (strain ATCC 49558 / DSM 4304 / JCM 9628 / NBRC 100126 / VC-16).